The primary structure comprises 132 residues: Mini-ribonuclease 3 (132 aa).

The active site involves Asp17.

This sequence belongs to the MrnC RNase family. Homodimer. Mg(2+) serves as cofactor.

It localises to the cytoplasm. Involved in correct processing of both the 5' and 3' ends of 23S rRNA precursor. Processes 30S rRNA precursor transcript even in absence of ribonuclease 3 (Rnc); Rnc processes 30S rRNA into smaller rRNA precursors. This is Mini-ribonuclease 3 from Enterococcus faecalis (strain ATCC 700802 / V583).